The sequence spans 447 residues: GTPase Era, mitochondrial (447 aa).

The N-terminal 18 residues, 1-18 (MTLRSCETFLRRSLRFST), are a transit peptide targeting the mitochondrion. One can recognise an Era-type G domain in the interval 109 to 340 (KSLKVAIVGS…RYLFVAAKPC (232 aa)). The interval 117–124 (GSPNAGKS) is G1. 117 to 124 (GSPNAGKS) provides a ligand contact to GTP. Positions 143 to 147 (HTTRS) are G2. The tract at residues 164–167 (DTPG) is G3. Residues 164-168 (DTPGL) and 233-236 (NKVD) contribute to the GTP site. The tract at residues 233–236 (NKVD) is G4. The G5 stretch occupies residues 318 to 320 (LSS). In terms of domain architecture, KH type-2 spans 370 to 447 (LPKEVPYTMT…RLKISVKLRK (78 aa)).

This sequence belongs to the TRAFAC class TrmE-Era-EngA-EngB-Septin-like GTPase superfamily. Era GTPase family.

The protein localises to the mitochondrion matrix. The protein resides in the mitochondrion inner membrane. Probable GTPase that plays a role in the mitochondrial ribosomal small subunit assembly. Specifically binds the 12S mitochondrial rRNA (12S mt-rRNA) to a 33 nucleotide section delineating the 3' terminal stem-loop region. May act as a chaperone that protects the 12S mt-rRNA on the 28S mitoribosomal subunit during ribosomal small subunit assembly. The chain is GTPase Era, mitochondrial (eral1) from Danio rerio (Zebrafish).